An 839-amino-acid polypeptide reads, in one-letter code: Translation initiation factor IF-2 (839 aa).

Composition is skewed to basic and acidic residues over residues 1–12 and 57–67; these read MSDNEIKNETPK and AEAKAQEKQAA. Disordered stretches follow at residues 1–21 and 57–244; these read MSDN…RRTK and AEAK…GASL. Residues 68–90 are compositionally biased toward low complexity; sequence EKAAQAQTEAKAQTEQACTTKKT. Composition is skewed to basic and acidic residues over residues 104–167, 185–199, and 212–233; these read PKTE…REET, READ…EGNR, and GGRE…DIKG. The tr-type G domain occupies 338–508; it reads TRAPVVTIMG…ILQSEVLELT (171 aa). The G1 stretch occupies residues 347–354; sequence GHVDHGKT. Position 347 to 354 (347 to 354) interacts with GTP; that stretch reads GHVDHGKT. The interval 372–376 is G2; sequence GITQH. The segment at 394 to 397 is G3; it reads DTPG. GTP contacts are provided by residues 394–398 and 448–451; these read DTPGH and NKID. Residues 448 to 451 form a G4 region; that stretch reads NKID. Residues 484–486 are G5; that stretch reads SAK.

The protein belongs to the TRAFAC class translation factor GTPase superfamily. Classic translation factor GTPase family. IF-2 subfamily.

It is found in the cytoplasm. Functionally, one of the essential components for the initiation of protein synthesis. Protects formylmethionyl-tRNA from spontaneous hydrolysis and promotes its binding to the 30S ribosomal subunits. Also involved in the hydrolysis of GTP during the formation of the 70S ribosomal complex. The sequence is that of Translation initiation factor IF-2 from Haemophilus ducreyi (strain 35000HP / ATCC 700724).